The sequence spans 221 residues: Transmembrane protein 267 (221 aa).

A run of 5 helical transmembrane segments spans residues 28–48 (ASAG…LPFI), 57–77 (LFDN…VIGL), 86–106 (VILA…MAGS), 121–141 (LHCS…MWAC), and 182–204 (ISYW…LMYL).

The protein resides in the membrane. This chain is Transmembrane protein 267 (tmem267), found in Danio rerio (Zebrafish).